A 181-amino-acid chain; its full sequence is Cytochrome b6-f complex iron-sulfur subunit (181 aa).

A disordered region spans residues 1-35 (MAQTGNFKSPARMSSLGQGAAPASSGAVTGGKPRE). 2 helical membrane-spanning segments follow: residues 53–73 (VGGV…KYII) and 114–134 (GGAL…VNWV). A Rieske domain is found at 85–178 (LTVGKASEVP…ARIEGDSIII (94 aa)). [2Fe-2S] cluster contacts are provided by cysteine 124, histidine 126, cysteine 142, and histidine 145. Cysteine 129 and cysteine 144 are oxidised to a cystine.

The protein belongs to the Rieske iron-sulfur protein family. [2Fe-2S] cluster is required as a cofactor.

It is found in the cell inner membrane. The enzyme catalyses 2 oxidized [plastocyanin] + a plastoquinol + 2 H(+)(in) = 2 reduced [plastocyanin] + a plastoquinone + 4 H(+)(out). Its function is as follows. Component of the green S-bacteria bc-complex which consists of the Rieske protein and cytochrome b subunit and which appears to lack a cytochrome c1-equivalent. This complex has a comparatively low redox potential. This Chlorobaculum thiosulfatiphilum (Chlorobium limicola f.sp. thiosulfatophilum) protein is Cytochrome b6-f complex iron-sulfur subunit (petC).